The sequence spans 110 residues: Thiosulfate sulfurtransferase GlpE (110 aa).

Positions Arg17–Ser105 constitute a Rhodanese domain. Cys65 (cysteine persulfide intermediate) is an active-site residue.

Belongs to the GlpE family.

It localises to the cytoplasm. It carries out the reaction thiosulfate + hydrogen cyanide = thiocyanate + sulfite + 2 H(+). It catalyses the reaction thiosulfate + [thioredoxin]-dithiol = [thioredoxin]-disulfide + hydrogen sulfide + sulfite + 2 H(+). Transferase that catalyzes the transfer of sulfur from thiosulfate to thiophilic acceptors such as cyanide or dithiols. May function in a CysM-independent thiosulfate assimilation pathway by catalyzing the conversion of thiosulfate to sulfite, which can then be used for L-cysteine biosynthesis. The sequence is that of Thiosulfate sulfurtransferase GlpE from Pseudomonas aeruginosa (strain LESB58).